Here is a 208-residue protein sequence, read N- to C-terminus: Large ribosomal subunit protein bL25 (208 aa).

The interval 1–20 (MANHQIKAQRRKDEGKGASR) is disordered.

The protein belongs to the bacterial ribosomal protein bL25 family. CTC subfamily. As to quaternary structure, part of the 50S ribosomal subunit; part of the 5S rRNA/L5/L18/L25 subcomplex. Contacts the 5S rRNA. Binds to the 5S rRNA independently of L5 and L18.

Functionally, this is one of the proteins that binds to the 5S RNA in the ribosome where it forms part of the central protuberance. This is Large ribosomal subunit protein bL25 from Xylella fastidiosa (strain 9a5c).